The chain runs to 197 residues: Small ribosomal subunit protein uS4 (197 aa).

Residues 87-147 (LRLDNVLFRL…EKSKSSARYK (61 aa)) form the S4 RNA-binding domain.

Belongs to the universal ribosomal protein uS4 family. Part of the 30S ribosomal subunit. Contacts protein S5. The interaction surface between S4 and S5 is involved in control of translational fidelity.

One of the primary rRNA binding proteins, it binds directly to 16S rRNA where it nucleates assembly of the body of the 30S subunit. Functionally, with S5 and S12 plays an important role in translational accuracy. The sequence is that of Small ribosomal subunit protein uS4 from Lachnospira eligens (strain ATCC 27750 / DSM 3376 / VPI C15-48 / C15-B4) (Eubacterium eligens).